The following is a 50-amino-acid chain: Ampulexin 2 (50 aa).

The signal sequence occupies residues 1–26 (MKAIMVLFYVMTLTIIGSFSMVSGSP).

Dimer; disulfide-linked. In terms of tissue distribution, expressed in venom sac and, to a lesser extent, in venom gland. Not expressed in brain.

Its subcellular location is the secreted. Amphipathic peptide which probably adopts an alpha-helical structure. Has no antimicrobial activity against E.coli DH5alpha or B.thuringiensis. Is not cytotoxic in vitro. The sequence is that of Ampulexin 2 from Ampulex compressa (Emerald cockroach wasp).